Here is a 298-residue protein sequence, read N- to C-terminus: Glutamyl-Q tRNA(Asp) synthetase (298 aa).

L-glutamate contacts are provided by residues Arg8 to Ser12 and Glu44. The short motif at Pro11–Ser21 is the 'HIGH' region element. Zn(2+) is bound by residues Cys100, Cys102, Tyr123, and Cys127. Residues Tyr183 and Arg201 each contribute to the L-glutamate site. Positions Lys239–Gln243 match the 'KMSKS' region motif. ATP is bound at residue Lys242.

It belongs to the class-I aminoacyl-tRNA synthetase family. GluQ subfamily. It depends on Zn(2+) as a cofactor.

Its function is as follows. Catalyzes the tRNA-independent activation of glutamate in presence of ATP and the subsequent transfer of glutamate onto a tRNA(Asp). Glutamate is transferred on the 2-amino-5-(4,5-dihydroxy-2-cyclopenten-1-yl) moiety of the queuosine in the wobble position of the QUC anticodon. The polypeptide is Glutamyl-Q tRNA(Asp) synthetase (Burkholderia orbicola (strain AU 1054)).